The sequence spans 358 residues: NADH-quinone oxidoreductase subunit H (358 aa).

A run of 8 helical transmembrane segments spans residues 29–49 (LIKIICVVLPLLGAVAYLTLW), 95–115 (GLFYLGPVMAIMPALGAWAVI), 130–150 (LLLVMAITSIEVYGVIIAGWA), 176–196 (FCFLVVIMVSGSMNLTEIVAV), 206–226 (GLGFLSWNWLPLFPIFIVYLI), 258–280 (GFAIFFLAEYASMWLVSILAVVM), 297–317 (GWIWLGIKTFLVVSMFIWIRA), and 334–354 (IFIPVTLVWLLVVGAWLLSPW).

Belongs to the complex I subunit 1 family. In terms of assembly, NDH-1 is composed of 14 different subunits. Subunits NuoA, H, J, K, L, M, N constitute the membrane sector of the complex.

It localises to the cell inner membrane. The enzyme catalyses a quinone + NADH + 5 H(+)(in) = a quinol + NAD(+) + 4 H(+)(out). Functionally, NDH-1 shuttles electrons from NADH, via FMN and iron-sulfur (Fe-S) centers, to quinones in the respiratory chain. The immediate electron acceptor for the enzyme in this species is believed to be ubiquinone. Couples the redox reaction to proton translocation (for every two electrons transferred, four hydrogen ions are translocated across the cytoplasmic membrane), and thus conserves the redox energy in a proton gradient. This subunit may bind ubiquinone. This is NADH-quinone oxidoreductase subunit H from Acidovorax sp. (strain JS42).